The chain runs to 375 residues: Ribosomal RNA large subunit methyltransferase G (375 aa).

The protein belongs to the methyltransferase superfamily. RlmG family.

It localises to the cytoplasm. It catalyses the reaction guanosine(1835) in 23S rRNA + S-adenosyl-L-methionine = N(2)-methylguanosine(1835) in 23S rRNA + S-adenosyl-L-homocysteine + H(+). Specifically methylates the guanine in position 1835 (m2G1835) of 23S rRNA. This is Ribosomal RNA large subunit methyltransferase G from Erwinia tasmaniensis (strain DSM 17950 / CFBP 7177 / CIP 109463 / NCPPB 4357 / Et1/99).